Consider the following 963-residue polypeptide: Glycine dehydrogenase (decarboxylating) (963 aa).

Lys710 is subject to N6-(pyridoxal phosphate)lysine.

It belongs to the GcvP family. The glycine cleavage system is composed of four proteins: P, T, L and H. Pyridoxal 5'-phosphate serves as cofactor.

It catalyses the reaction N(6)-[(R)-lipoyl]-L-lysyl-[glycine-cleavage complex H protein] + glycine + H(+) = N(6)-[(R)-S(8)-aminomethyldihydrolipoyl]-L-lysyl-[glycine-cleavage complex H protein] + CO2. The glycine cleavage system catalyzes the degradation of glycine. The P protein binds the alpha-amino group of glycine through its pyridoxal phosphate cofactor; CO(2) is released and the remaining methylamine moiety is then transferred to the lipoamide cofactor of the H protein. This is Glycine dehydrogenase (decarboxylating) from Pseudoalteromonas translucida (strain TAC 125).